The following is a 551-amino-acid chain: Cytosolic Fe-S cluster assembly factor NAR1 (551 aa).

[4Fe-4S] cluster-binding residues include C20, C57, C60, C63, C178, and C242. Residues 395–435 form a disordered region; that stretch reads DPSGHKKRSVRRVAALRSRGRKDSSSEDSTGTPSAISNALG. Polar residues predominate over residues 421 to 431; sequence EDSTGTPSAIS. C451 is a binding site for [4Fe-4S] cluster.

Belongs to the NARF family.

Component of the cytosolic Fe/S protein assembly machinery. Required for maturation of extramitochondrial Fe/S proteins. May play a role in the transfer of pre-assembled Fe/S clusters to target apoproteins. The protein is Cytosolic Fe-S cluster assembly factor NAR1 (NAR1) of Candida glabrata (strain ATCC 2001 / BCRC 20586 / JCM 3761 / NBRC 0622 / NRRL Y-65 / CBS 138) (Yeast).